A 440-amino-acid polypeptide reads, in one-letter code: L-gulonolactone oxidase (440 aa).

An FAD-binding PCMH-type domain is found at 17–187 (YSCEPELYFE…LNVTIQCVPA (171 aa)). Pros-8alpha-FAD histidine is present on histidine 54. The chain crosses the membrane as a helical span at residues 245–267 (WFWNYAIGYYLLEFLLWISVFVP).

The protein belongs to the oxygen-dependent FAD-linked oxidoreductase family. The cofactor is FAD.

The protein resides in the microsome membrane. The protein localises to the endoplasmic reticulum membrane. It carries out the reaction L-gulono-1,4-lactone + O2 = L-ascorbate + H2O2 + H(+). It functions in the pathway cofactor biosynthesis; L-ascorbate biosynthesis via UDP-alpha-D-glucuronate pathway; L-ascorbate from UDP-alpha-D-glucuronate: step 4/4. Oxidizes L-gulono-1,4-lactone to hydrogen peroxide and L-xylo-hexulonolactone which spontaneously isomerizes to L-ascorbate. This is L-gulonolactone oxidase (GULO) from Scyliorhinus torazame (Cloudy catshark).